A 284-amino-acid chain; its full sequence is tRNA pseudouridine synthase A (284 aa).

Asp62 serves as the catalytic Nucleophile. Tyr123 contacts substrate.

Belongs to the tRNA pseudouridine synthase TruA family. Homodimer.

The enzyme catalyses uridine(38/39/40) in tRNA = pseudouridine(38/39/40) in tRNA. Functionally, formation of pseudouridine at positions 38, 39 and 40 in the anticodon stem and loop of transfer RNAs. The protein is tRNA pseudouridine synthase A of Streptomyces griseus subsp. griseus (strain JCM 4626 / CBS 651.72 / NBRC 13350 / KCC S-0626 / ISP 5235).